Reading from the N-terminus, the 843-residue chain is Protein P (843 aa).

Residues 1–177 (MPLSYQHFRK…FCGSPYSWEQ (177 aa)) are terminal protein domain (TP). Residues 178–346 (ELQHGRLVFQ…YCLTHIVNLL (169 aa)) are spacer. Disordered regions lie at residues 220–273 (QSRL…SSTS) and 289–316 (LSTSKRQSSSGHAVEFHNIPPSSARSQS). Polar residues predominate over residues 289–299 (LSTSKRQSSSG). A polymerase/reverse transcriptase domain (RT) region spans residues 347–690 (EDWGPCTEHG…YLNLYPVARQ (344 aa)). The Reverse transcriptase domain maps to 357 to 600 (EHNIRIPRTP…YSLNFMGYVI (244 aa)). Mg(2+) contacts are provided by aspartate 429, aspartate 551, and aspartate 552.

Belongs to the hepadnaviridae P protein family.

It catalyses the reaction DNA(n) + a 2'-deoxyribonucleoside 5'-triphosphate = DNA(n+1) + diphosphate. It carries out the reaction Endonucleolytic cleavage to 5'-phosphomonoester.. Its activity is regulated as follows. Activated by host HSP70 and HSP40 in vitro to be able to bind the epsilon loop of the pgRNA. Because deletion of the RNase H region renders the protein partly chaperone-independent, the chaperones may be needed indirectly to relieve occlusion of the RNA-binding site by this domain. Inhibited by several reverse-transcriptase inhibitors: Lamivudine, Adefovir and Entecavir. Functionally, multifunctional enzyme that converts the viral RNA genome into dsDNA in viral cytoplasmic capsids. This enzyme displays a DNA polymerase activity that can copy either DNA or RNA templates, and a ribonuclease H (RNase H) activity that cleaves the RNA strand of RNA-DNA heteroduplexes in a partially processive 3'- to 5'-endonucleasic mode. Neo-synthesized pregenomic RNA (pgRNA) are encapsidated together with the P protein, and reverse-transcribed inside the nucleocapsid. Initiation of reverse-transcription occurs first by binding the epsilon loop on the pgRNA genome, and is initiated by protein priming, thereby the 5'-end of (-)DNA is covalently linked to P protein. Partial (+)DNA is synthesized from the (-)DNA template and generates the relaxed circular DNA (RC-DNA) genome. After budding and infection, the RC-DNA migrates in the nucleus, and is converted into a plasmid-like covalently closed circular DNA (cccDNA). The activity of P protein does not seem to be necessary for cccDNA generation, and is presumably released from (+)DNA by host nuclear DNA repair machinery. This chain is Protein P, found in Hepatitis B virus genotype C subtype ad (isolate Japan/S-179/1988) (HBV-C).